Consider the following 378-residue polypeptide: 1-acyl-sn-glycerol-3-phosphate acyltransferase delta (378 aa).

A helical membrane pass occupies residues 11–31 (FLCHLVFCYVFIASGLIVNAI). Positions 96–101 (HKFEID) match the HXXXXD motif motif. Helical transmembrane passes span 125 to 145 (ELAY…IFCT), 311 to 331 (WLFW…SMVS), and 338 to 358 (LASL…MIGV).

Belongs to the 1-acyl-sn-glycerol-3-phosphate acyltransferase family.

It localises to the endoplasmic reticulum membrane. The catalysed reaction is a 1-acyl-sn-glycero-3-phosphate + an acyl-CoA = a 1,2-diacyl-sn-glycero-3-phosphate + CoA. The enzyme catalyses (4Z,7Z,10Z,13Z,16Z,19Z)-docosahexaenoyl-CoA + 1-hexadecanoyl-sn-glycero-3-phosphate = 1-hexadecanoyl-2-(4Z,7Z,10Z,13Z,16Z,19Z-docosahexaenoyl)-sn-glycero-3-phosphate + CoA. It catalyses the reaction 1-octadecanoyl-sn-glycero-3-phosphate + (9Z,12Z)-octadecadienoyl-CoA = 1-octadecanoyl-2-(9Z,12Z-octadecadienoyl)-sn-glycero-3-phosphate + CoA. It carries out the reaction 1-octadecanoyl-sn-glycero-3-phosphate + (4Z,7Z,10Z,13Z,16Z,19Z)-docosahexaenoyl-CoA = 1-octadecanoyl-2-(4Z,7Z,10Z,13Z,16Z,19Z-docosahexaenoyl)-sn-glycero-3-phosphate + CoA. The catalysed reaction is (4Z,7Z,10Z,13Z,16Z,19Z)-docosahexaenoyl-CoA + 1-(9Z-octadecenoyl)-sn-glycero-3-phosphate = 1-(9Z-octadecenoyl)-2-(4Z,7Z,10Z,13Z,16Z,19Z-docosahexaenoyl)-sn-glycero-3-phosphate + CoA. The protein operates within phospholipid metabolism; CDP-diacylglycerol biosynthesis; CDP-diacylglycerol from sn-glycerol 3-phosphate: step 2/3. Converts 1-acyl-sn-glycerol-3-phosphate (lysophosphatidic acid or LPA) into 1,2-diacyl-sn-glycerol-3-phosphate (phosphatidic acid or PA) by incorporating an acyl moiety at the sn-2 position of the glycerol backbone. Exhibits high acyl-CoA specificity for polyunsaturated fatty acyl-CoA, especially docosahexaenoyl-CoA (22:6-CoA, DHA-CoA). The protein is 1-acyl-sn-glycerol-3-phosphate acyltransferase delta (Agpat4) of Rattus norvegicus (Rat).